Here is a 62-residue protein sequence, read N- to C-terminus: Photosystem II reaction center protein Z (62 aa).

The next 2 membrane-spanning stretches (helical) occupy residues 8 to 28 and 41 to 61; these read AVFA…LVFA and FSGT…NSLI.

Belongs to the PsbZ family. In terms of assembly, PSII is composed of 1 copy each of membrane proteins PsbA, PsbB, PsbC, PsbD, PsbE, PsbF, PsbH, PsbI, PsbJ, PsbK, PsbL, PsbM, PsbT, PsbY, PsbZ, Psb30/Ycf12, at least 3 peripheral proteins of the oxygen-evolving complex and a large number of cofactors. It forms dimeric complexes.

Its subcellular location is the plastid. The protein resides in the chloroplast thylakoid membrane. Its function is as follows. May control the interaction of photosystem II (PSII) cores with the light-harvesting antenna, regulates electron flow through the 2 photosystem reaction centers. PSII is a light-driven water plastoquinone oxidoreductase, using light energy to abstract electrons from H(2)O, generating a proton gradient subsequently used for ATP formation. The chain is Photosystem II reaction center protein Z from Oryza nivara (Indian wild rice).